Consider the following 218-residue polypeptide: Regulator of G-protein signaling 20 (218 aa).

Residues 1–10 (MGSERTEMRK) show a composition bias toward basic and acidic residues. Positions 1-26 (MGSERTEMRKRQMAATQETPGTAQAQ) are disordered. Positions 14–26 (AATQETPGTAQAQ) are enriched in polar residues. The region spanning 92–208 (SFDKLMLTPA…MNSAIYKDLL (117 aa)) is the RGS domain.

Forms a complex with G(alpha)z/i2 subunits and mu-opioid receptors; the formation of this complex results in mu-opioid receptor desensitization. Interacts with OPRM1. Post-translationally, fatty acylated. Heavily palmitoylated in the cysteine string motif. N- and O-glycosylated in synapsomal membranes. In terms of processing, sumoylated by SUMO1 and SUM02 in synaptosomes. The sumoylated forms act as a scaffold for sequestering mu-opioid receptor-activated G(alpha) subunits.

It localises to the membrane. The protein resides in the nucleus. It is found in the cytoplasm. Inhibits signal transduction by increasing the GTPase activity of G protein alpha subunits thereby driving them into their inactive GDP-bound form. Binds selectively to G(z)-alpha and G(alpha)-i2 subunits, accelerates their GTPase activity and regulates their signaling activities. The G(z)-alpha activity is inhibited by the phosphorylation and palmitoylation of the G-protein. Negatively regulates mu-opioid receptor-mediated activation of the G-proteins. The protein is Regulator of G-protein signaling 20 (RGS20) of Gallus gallus (Chicken).